Reading from the N-terminus, the 261-residue chain is DNA repair protein RecO (261 aa).

Belongs to the RecO family.

In terms of biological role, involved in DNA repair and RecF pathway recombination. This chain is DNA repair protein RecO, found in Chlorobium phaeobacteroides (strain BS1).